An 87-amino-acid polypeptide reads, in one-letter code: Down syndrome critical region protein 10 (87 aa).

As to expression, expressed in placenta and testis.

This chain is Down syndrome critical region protein 10 (DSCR10), found in Homo sapiens (Human).